Reading from the N-terminus, the 354-residue chain is 4-hydroxy-3-methylbut-2-en-1-yl diphosphate synthase (flavodoxin) (354 aa).

[4Fe-4S] cluster contacts are provided by Cys265, Cys268, Cys300, and Glu307.

It belongs to the IspG family. The cofactor is [4Fe-4S] cluster.

It catalyses the reaction (2E)-4-hydroxy-3-methylbut-2-enyl diphosphate + oxidized [flavodoxin] + H2O + 2 H(+) = 2-C-methyl-D-erythritol 2,4-cyclic diphosphate + reduced [flavodoxin]. It functions in the pathway isoprenoid biosynthesis; isopentenyl diphosphate biosynthesis via DXP pathway; isopentenyl diphosphate from 1-deoxy-D-xylulose 5-phosphate: step 5/6. In terms of biological role, converts 2C-methyl-D-erythritol 2,4-cyclodiphosphate (ME-2,4cPP) into 1-hydroxy-2-methyl-2-(E)-butenyl 4-diphosphate. This Hydrogenobaculum sp. (strain Y04AAS1) protein is 4-hydroxy-3-methylbut-2-en-1-yl diphosphate synthase (flavodoxin).